A 734-amino-acid chain; its full sequence is Photosystem I P700 chlorophyll a apoprotein A2 (734 aa).

8 helical membrane-spanning segments follow: residues 46-69, 135-158, 175-199, 273-291, 330-353, 369-395, 417-439, and 517-535; these read IFAS…FHVA, LYNG…LHLQ, LNHH…HVAI, IAHH…GHMY, IHFQ…QHMY, AALY…IFFI, AIIS…LYVH, and FLVH…LILV. Cys559 and Cys568 together coordinate [4Fe-4S] cluster. Transmembrane regions (helical) follow at residues 575-596 and 643-665; these read AFYL…YWHW and LSVW…MFLI. Chlorophyll a-binding residues include His654, Met662, and Tyr670. Trp671 is a binding site for phylloquinone. Residues 707–727 traverse the membrane as a helical segment; that stretch reads LVGLAHFSVGYIFTYAAFLIA.

Belongs to the PsaA/PsaB family. In terms of assembly, the PsaA/B heterodimer binds the P700 chlorophyll special pair and subsequent electron acceptors. PSI consists of a core antenna complex that captures photons, and an electron transfer chain that converts photonic excitation into a charge separation. The eukaryotic PSI reaction center is composed of at least 11 subunits. P700 is a chlorophyll a/chlorophyll a' dimer, A0 is one or more chlorophyll a, A1 is one or both phylloquinones and FX is a shared 4Fe-4S iron-sulfur center. is required as a cofactor.

The protein resides in the plastid. It is found in the chloroplast thylakoid membrane. The catalysed reaction is reduced [plastocyanin] + hnu + oxidized [2Fe-2S]-[ferredoxin] = oxidized [plastocyanin] + reduced [2Fe-2S]-[ferredoxin]. Its function is as follows. PsaA and PsaB bind P700, the primary electron donor of photosystem I (PSI), as well as the electron acceptors A0, A1 and FX. PSI is a plastocyanin-ferredoxin oxidoreductase, converting photonic excitation into a charge separation, which transfers an electron from the donor P700 chlorophyll pair to the spectroscopically characterized acceptors A0, A1, FX, FA and FB in turn. Oxidized P700 is reduced on the lumenal side of the thylakoid membrane by plastocyanin. The polypeptide is Photosystem I P700 chlorophyll a apoprotein A2 (Morus indica (Mulberry)).